The chain runs to 311 residues: Glycerol-3-phosphate dehydrogenase [NAD(P)+] (311 aa).

The NADPH site is built by Trp-12, Arg-31, Arg-32, and Lys-96. 3 residues coordinate sn-glycerol 3-phosphate: Lys-96, Gly-124, and Ser-126. Ala-128 contacts NADPH. Sn-glycerol 3-phosphate is bound by residues Lys-178, Asp-231, Ser-241, Arg-242, and Asn-243. Lys-178 serves as the catalytic Proton acceptor. An NADPH-binding site is contributed by Arg-242. The NADPH site is built by Val-266 and Glu-268.

Belongs to the NAD-dependent glycerol-3-phosphate dehydrogenase family.

The protein localises to the cytoplasm. It catalyses the reaction sn-glycerol 3-phosphate + NAD(+) = dihydroxyacetone phosphate + NADH + H(+). It carries out the reaction sn-glycerol 3-phosphate + NADP(+) = dihydroxyacetone phosphate + NADPH + H(+). The protein operates within membrane lipid metabolism; glycerophospholipid metabolism. Functionally, catalyzes the reduction of the glycolytic intermediate dihydroxyacetone phosphate (DHAP) to sn-glycerol 3-phosphate (G3P), the key precursor for phospholipid synthesis. This Helicobacter hepaticus (strain ATCC 51449 / 3B1) protein is Glycerol-3-phosphate dehydrogenase [NAD(P)+].